Consider the following 312-residue polypeptide: Putative tricarboxylate transport protein, mitochondrial (312 aa).

Solcar repeat units lie at residues Glu-23–Gln-111, Val-122–Trp-208, and Ile-218–Phe-303. 6 consecutive transmembrane segments (helical) span residues Ile-29–Val-49, Val-75–Ile-95, Leu-126–Val-146, Phe-164–Val-184, Pro-221–Ile-241, and Val-286–Val-306.

Belongs to the mitochondrial carrier (TC 2.A.29) family.

Its subcellular location is the mitochondrion inner membrane. In terms of biological role, transport of citrate across inner mitochondrial membrane. This is Putative tricarboxylate transport protein, mitochondrial from Caenorhabditis elegans.